Reading from the N-terminus, the 23-residue chain is Phallacidin proprotein 1 (23 aa).

A propeptide is located at residue P1. The segment at residues 2-8 (AWLVDCP) is a cross-link (cyclopeptide (Ala-Pro)). A cross-link (2'-cysteinyl-6'-hydroxytryptophan sulfoxide (Trp-Cys)) is located at residues 3 to 7 (WLVDC). The propeptide occupies 9-23 (CVGDDINRLLTRGEK).

Belongs to the MSDIN fungal toxin family. In terms of processing, processed by the macrocyclase-peptidase enzyme POPB to yield a toxic cyclic heptapeptide. POPB first removes 10 residues from the N-terminus. Conformational trapping of the remaining peptide forces the enzyme to release this intermediate rather than proceed to macrocyclization. The enzyme rebinds the remaining peptide in a different conformation and catalyzes macrocyclization of the N-terminal 7 residues.

Functionally, major toxin that belongs to the bicyclic heptapeptides called phallotoxins. Although structurally related to amatoxins, phallotoxins have a different mode of action, which is the stabilization of F-actin. Phallotoxins are poisonous when administered parenterally, but not orally because of poor absorption. This chain is Phallacidin proprotein 1, found in Amanita phalloides (Death cap).